The primary structure comprises 205 residues: Probable molybdenum cofactor guanylyltransferase (205 aa).

Residues 10–12, Lys22, Asp69, and Asp100 each bind GTP; that span reads LAG. Asp100 lines the Mg(2+) pocket.

It belongs to the MobA family. Mg(2+) serves as cofactor.

The protein resides in the cytoplasm. It carries out the reaction Mo-molybdopterin + GTP + H(+) = Mo-molybdopterin guanine dinucleotide + diphosphate. Functionally, transfers a GMP moiety from GTP to Mo-molybdopterin (Mo-MPT) cofactor (Moco or molybdenum cofactor) to form Mo-molybdopterin guanine dinucleotide (Mo-MGD) cofactor. The protein is Probable molybdenum cofactor guanylyltransferase of Natranaerobius thermophilus (strain ATCC BAA-1301 / DSM 18059 / JW/NM-WN-LF).